Consider the following 500-residue polypeptide: ACT domain-containing protein ACR2 (500 aa).

ACT domains follow at residues 39–121 (VVKV…EANN), 136–213 (AIEM…ADPA), 298–373 (IVTV…RVCE), and 376–459 (KLEL…TVGS). Residues 450–478 (EDTKIDTVGSDEPTASASATPQRQPQPHR) are disordered. Residues 462–474 (PTASASATPQRQP) show a composition bias toward polar residues.

Its function is as follows. May bind amino acids. This is ACT domain-containing protein ACR2 from Arabidopsis thaliana (Mouse-ear cress).